A 361-amino-acid polypeptide reads, in one-letter code: Ribosomal RNA large subunit methyltransferase M (361 aa).

Residues Ser186, 219-222, Asp238, Asp258, and Asp275 contribute to the S-adenosyl-L-methionine site; that span reads CPGG. Lys304 (proton acceptor) is an active-site residue.

The protein belongs to the class I-like SAM-binding methyltransferase superfamily. RNA methyltransferase RlmE family. RlmM subfamily. As to quaternary structure, monomer.

It localises to the cytoplasm. The enzyme catalyses cytidine(2498) in 23S rRNA + S-adenosyl-L-methionine = 2'-O-methylcytidine(2498) in 23S rRNA + S-adenosyl-L-homocysteine + H(+). Functionally, catalyzes the 2'-O-methylation at nucleotide C2498 in 23S rRNA. In Pseudoalteromonas translucida (strain TAC 125), this protein is Ribosomal RNA large subunit methyltransferase M.